The sequence spans 404 residues: Cysteine desulfurase IscS (404 aa).

Residues 75–76 (AT), Asn-155, Gln-183, and 203–205 (SAH) contribute to the pyridoxal 5'-phosphate site. N6-(pyridoxal phosphate)lysine is present on Lys-206. Thr-243 lines the pyridoxal 5'-phosphate pocket. Residue Cys-328 is the Cysteine persulfide intermediate of the active site. Cys-328 serves as a coordination point for [2Fe-2S] cluster.

This sequence belongs to the class-V pyridoxal-phosphate-dependent aminotransferase family. NifS/IscS subfamily. As to quaternary structure, homodimer. Forms a heterotetramer with IscU, interacts with other sulfur acceptors. It depends on pyridoxal 5'-phosphate as a cofactor.

Its subcellular location is the cytoplasm. It catalyses the reaction (sulfur carrier)-H + L-cysteine = (sulfur carrier)-SH + L-alanine. Its pathway is cofactor biosynthesis; iron-sulfur cluster biosynthesis. In terms of biological role, master enzyme that delivers sulfur to a number of partners involved in Fe-S cluster assembly, tRNA modification or cofactor biosynthesis. Catalyzes the removal of elemental sulfur atoms from cysteine to produce alanine. Functions as a sulfur delivery protein for Fe-S cluster synthesis onto IscU, an Fe-S scaffold assembly protein, as well as other S acceptor proteins. This chain is Cysteine desulfurase IscS, found in Shewanella loihica (strain ATCC BAA-1088 / PV-4).